The primary structure comprises 833 residues: Leucine--tRNA ligase (833 aa).

The 'HIGH' region signature appears at 41 to 52; it reads PYPSGAGLHVGH. Positions 610–614 match the 'KMSKS' region motif; it reads KMSKS. An ATP-binding site is contributed by lysine 613.

It belongs to the class-I aminoacyl-tRNA synthetase family.

It localises to the cytoplasm. It carries out the reaction tRNA(Leu) + L-leucine + ATP = L-leucyl-tRNA(Leu) + AMP + diphosphate. The sequence is that of Leucine--tRNA ligase from Streptococcus agalactiae serotype III (strain NEM316).